The chain runs to 513 residues: Pleiotropic regulator 1 (513 aa).

The residue at position 1 (M1) is an N-acetylmethionine. The tract at residues 60–79 (TSKENLKEKGPQNATDSYPH) is disordered. Position 119 is a phosphoserine (S119). Residues 136–160 (VDANRTGPAGSEYRHPGASDRSQPT) are disordered. Position 200 is a phosphoserine (S200). WD repeat units follow at residues 201 to 240 (GHLGWVRCIAVEPGNQWFVTGSADRTIKIWDLASGKLKLS), 243 to 282 (GHISTVRGVIVSTRSPYLFSCGEDKQVKCWDLEYNKVIRH), 285 to 324 (GHLSAVYGLDLHPTLDVLVTCSRDSTARIWDVRTKASVHT), 327 to 366 (GHTNAVATVRCQAAEPQIITGSHDTTIRLWDLVAGKTRVT), 369 to 409 (NHKK…QNLS), 410 to 448 (GHNAIINTLAVNADGVLVSGADNGTMHLWDWRTGYNFQR), and 459 to 498 (DSESGIFACAFDRSESRLLTAEADKTIKVYREDETATEET). Phosphoserine is present on S390.

Belongs to the WD repeat PRL1/PRL2 family. In terms of assembly, identified in the spliceosome C complex. Component of the PRP19-CDC5L splicing complex composed of a core complex comprising a homotetramer of PRPF19, CDC5L, PLRG1 and BCAS2, and at least three less stably associated proteins CTNNBL1, CWC15 and HSPA8. Interacts (via its WD40 repeat domain) directly with CDC5L (via its C-terminal); the interaction is required for mRNA splicing but not for spliceosome assembly. Component of the minor spliceosome, which splices U12-type introns. Within this complex, interacts with CRIPT. Also interacts directly in the complex with BCAS2 and PRPF19. Interacts with USB1.

Its subcellular location is the nucleus. The protein resides in the nucleus speckle. In terms of biological role, involved in pre-mRNA splicing as component of the spliceosome. Component of the PRP19-CDC5L complex that forms an integral part of the spliceosome and is required for activating pre-mRNA splicing. As a component of the minor spliceosome, involved in the splicing of U12-type introns in pre-mRNAs. In Mus musculus (Mouse), this protein is Pleiotropic regulator 1 (Plrg1).